Here is a 224-residue protein sequence, read N- to C-terminus: Putative ankyrin repeat protein R845 (224 aa).

ANK repeat units follow at residues 1-14 (MVEY…DVRS), 15-44 (NYDH…DVSM), 46-74 (YDYI…DPRT), 75-104 (NNDK…DIRI), 105-134 (DNDS…DIRA), 136-164 (NDYS…DVRA), 165-194 (DNDY…DFRA), and 196-224 (NDCA…VCPY).

This Acanthamoeba polyphaga mimivirus (APMV) protein is Putative ankyrin repeat protein R845.